A 484-amino-acid chain; its full sequence is Signal transduction histidine-protein kinase/phosphatase MprB (484 aa).

Low complexity predominate over residues 1–10; the sequence is MAADNAGRWP. The tract at residues 1-23 is disordered; sequence MAADNAGRWPGQPPGPPAPTHPA. The Cytoplasmic portion of the chain corresponds to 1-31; the sequence is MAADNAGRWPGQPPGPPAPTHPASSVSLRWR. Residues 11–20 are compositionally biased toward pro residues; the sequence is GQPPGPPAPT. The helical transmembrane segment at 32-52 threads the bilayer; that stretch reads VMLLAMSMVVISVVLMAVAVF. At 53–172 the chain is on the extracellular side; that stretch reads AVTSRALYDD…TGKVLKRLGT (120 aa). A helical membrane pass occupies residues 173–193; sequence VLLIVGGLGVAVAAIAGGMVA. Residues 194 to 246 form the HAMP domain; the sequence is SAGLRPVGRLTQAAERVARTDDLRPIPVIGNDELARLTETFNMMLRALAESRE. The Cytoplasmic segment spans residues 194–484; that stretch reads SAGLRPVGRL…SPAGSDEAER (291 aa). The Histidine kinase domain occupies 254–474; the sequence is DAGHELRTPL…AMHVVLPGRP (221 aa). At H257 the chain carries Phosphohistidine; by autocatalysis.

The cofactor is Mg(2+). Mn(2+) is required as a cofactor. Autophosphorylated.

The protein localises to the cell membrane. It carries out the reaction ATP + protein L-histidine = ADP + protein N-phospho-L-histidine.. Member of the two-component regulatory system MprB/MprA which contributes to maintaining a balance among several systems involved in stress resistance and is required for establishment and maintenance of persistent infection in the host. In response to environmental signals MprB acts both as a membrane-associated protein kinase that undergoes autophosphorylation and subsequently transfers the phosphate to MprA, and a protein phosphatase that dephosphorylates phospho-MprA. The protein is Signal transduction histidine-protein kinase/phosphatase MprB (mprB) of Mycolicibacterium vanbaalenii (strain DSM 7251 / JCM 13017 / BCRC 16820 / KCTC 9966 / NRRL B-24157 / PYR-1) (Mycobacterium vanbaalenii).